Here is a 101-residue protein sequence, read N- to C-terminus: MRERKLRKQLEDLFKRFASVQHGHSDCINIIIAKIKSDQPGESKYARRRRAKSIARCPRCARVSPGFYFTTRCDGKTCRPGLSARPDLLEFIGIDLCVRSK.

Residues 47–50 (RRRR) are basic. The segment at 57-78 (CPRCARVSPGFYFTTRCDGKTC) adopts a C4-type zinc-finger fold.

The protein belongs to the carlaviruses nucleic acid-binding protein family.

Suppressor of viral-induced RNA silencing. The potential mechanism of action is based on sequestering siRNAs. The chain is RNA silencing suppressor (TUC) from Dianthus caryophyllus (Carnation).